We begin with the raw amino-acid sequence, 236 residues long: Movement and silencing protein TGBp1 (236 aa).

Positions 1–117 constitute a (+)RNA virus helicase ATP-binding domain; it reads MDHIHHLLSS…DNLFEPHYTL (117 aa). Residues 118 to 236 enclose the (+)RNA virus helicase C-terminal domain; it reads EITYRFGPNT…LGPDAFDSSP (119 aa).

Belongs to the Tymovirales TGBp1 protein family. In terms of assembly, homodimer and homooligomer. Interacts with capsid protein. Interacts with host AGO1; this interaction targets the host protein for degradation, thereby suppressing the antiviral RNA silencing.

The protein resides in the host cytoplasm. Transports viral genome to neighboring plant cells directly through plasmosdesmata, without any budding. The movement protein allows efficient cell to cell propagation, by bypassing the host cell wall barrier. Increases plasmodesma size exclusion limit. Acts as a suppressor of RNA-mediated gene silencing, also known as post-transcriptional gene silencing (PTGS), a mechanism of plant viral defense that limits the accumulation of viral RNAs. The protein is Movement and silencing protein TGBp1 of White clover mosaic virus (strain O) (WCMV).